We begin with the raw amino-acid sequence, 295 residues long: MYTGRFAPSPTGLLHIGSLLTAAASYADARSNGGKWLVRMEDLDPPREMPGAASHILHTLEAFGFEWDGEVAYQSRRYALYEETLCRLQTAGLVYPCHCSRKDWQAAAVHGADGFVYNGRCRNPQQRPALQGKQPAWRIRVPDRDIGFSDGIVGGYAQNLARDIGDFVLLRADGYWAYQLAVVADDAEQGVTHIVRGQDLLVSTPRQIYLQQCLGVPTPQYAHLPLLTNAQGQKWSKQTLAPALDLNRREQLLRQVFRYLKLPEAPETDRPAELLDWAVAHWDMGKVPKHAITTP.

Residues 5–9 and Glu41 contribute to the L-glutamate site; that span reads RFAPS. Residues 8–18 carry the 'HIGH' region motif; sequence PSPTGLLHIGS. Residues Cys97, Cys99, Tyr117, and Cys121 each contribute to the Zn(2+) site. 2 residues coordinate L-glutamate: Tyr178 and Arg196. A 'KMSKS' region motif is present at residues 234–238; it reads KWSKQ. Lys237 provides a ligand contact to ATP.

Belongs to the class-I aminoacyl-tRNA synthetase family. GluQ subfamily. Zn(2+) serves as cofactor.

Catalyzes the tRNA-independent activation of glutamate in presence of ATP and the subsequent transfer of glutamate onto a tRNA(Asp). Glutamate is transferred on the 2-amino-5-(4,5-dihydroxy-2-cyclopenten-1-yl) moiety of the queuosine in the wobble position of the QUC anticodon. This chain is Glutamyl-Q tRNA(Asp) synthetase, found in Neisseria meningitidis serogroup C / serotype 2a (strain ATCC 700532 / DSM 15464 / FAM18).